A 61-amino-acid chain; its full sequence is Alpha-conotoxin-like PnMGMR-02 (61 aa).

An N-terminal signal peptide occupies residues 1–21 (MGMRMMFTVFLLVVLATTVVS). Residues 22-44 (FTSDRASDGGNAAASDLIALTIK) constitute a propeptide that is removed on maturation. 2 disulfides stabilise this stretch: C46-C52 and C47-C60. The tract at residues 48–50 (SRP) is ser-Xaa-Pro motif, crucial for potent interaction with nAChR. The residue at position 60 (C60) is a Cysteine amide.

It belongs to the conotoxin A superfamily. As to expression, expressed by the venom duct.

The protein localises to the secreted. Functionally, alpha-conotoxins act on postsynaptic membranes, they bind to the nicotinic acetylcholine receptors (nAChR) and thus inhibit them. This toxin blocks mammalian nAChRs (alpha-7 &gt; alpha-3/beta-2). The protein is Alpha-conotoxin-like PnMGMR-02 of Conus pennaceus (Feathered cone).